We begin with the raw amino-acid sequence, 447 residues long: Tubulin beta-2 chain (447 aa).

GTP-binding residues include glutamine 11, glutamate 69, serine 138, glycine 142, threonine 143, glycine 144, asparagine 204, and asparagine 226. Glutamate 69 serves as a coordination point for Mg(2+). The interval 426 to 447 (QDAGVDEEEEEYEDDAPLEEEV) is disordered. Positions 429 to 447 (GVDEEEEEYEDDAPLEEEV) are enriched in acidic residues.

Belongs to the tubulin family. In terms of assembly, dimer of alpha and beta chains. A typical microtubule is a hollow water-filled tube with an outer diameter of 25 nm and an inner diameter of 15 nM. Alpha-beta heterodimers associate head-to-tail to form protofilaments running lengthwise along the microtubule wall with the beta-tubulin subunit facing the microtubule plus end conferring a structural polarity. Microtubules usually have 13 protofilaments but different protofilament numbers can be found in some organisms and specialized cells. It depends on Mg(2+) as a cofactor.

The protein resides in the cytoplasm. The protein localises to the cytoskeleton. Tubulin is the major constituent of microtubules, a cylinder consisting of laterally associated linear protofilaments composed of alpha- and beta-tubulin heterodimers. Microtubules grow by the addition of GTP-tubulin dimers to the microtubule end, where a stabilizing cap forms. Below the cap, tubulin dimers are in GDP-bound state, owing to GTPase activity of alpha-tubulin. The chain is Tubulin beta-2 chain (TUB2) from Colletotrichum graminicola (Maize anthracnose fungus).